The chain runs to 387 residues: Pepsin A (387 aa).

The first 16 residues, 1 to 16 (MKKLLLLLGLVALSEC), serve as a signal peptide directing secretion. Residues 17 to 61 (LYKVPLVKKKSLRQNLIENGLLKDFLAKHNVNPASKYFPTEAATE) constitute a propeptide, activation peptide. Residues 75-384 (YFGTIGIGTP…DRGNNRVGLA (310 aa)) form the Peptidase A1 domain. Asp-93 is a catalytic residue. Cys-106 and Cys-111 form a disulfide bridge. Position 129 is a phosphoserine (Ser-129). Cys-267 and Cys-271 are joined by a disulfide. Residue Asp-276 is part of the active site. Cys-310 and Cys-343 form a disulfide bridge.

This sequence belongs to the peptidase A1 family.

The protein localises to the secreted. It catalyses the reaction Preferential cleavage: hydrophobic, preferably aromatic, residues in P1 and P1' positions. Cleaves 1-Phe-|-Val-2, 4-Gln-|-His-5, 13-Glu-|-Ala-14, 14-Ala-|-Leu-15, 15-Leu-|-Tyr-16, 16-Tyr-|-Leu-17, 23-Gly-|-Phe-24, 24-Phe-|-Phe-25 and 25-Phe-|-Tyr-26 bonds in the B chain of insulin.. In terms of biological role, shows particularly broad specificity; although bonds involving phenylalanine and leucine are preferred, many others are also cleaved to some extent. This is Pepsin A (PGA) from Suncus murinus (Asian house shrew).